Here is a 46-residue protein sequence, read N- to C-terminus: U2-plectoxin-Pt1a (46 aa).

In terms of processing, contains 4 disulfide bonds. In terms of tissue distribution, expressed by the venom gland.

It localises to the secreted. Functionally, potent toxin that may paralyze and/or kill insect pests such as H.virescens (lepidoptera), S.exigua (beet armyworm) and M.sexta (tobacco hornworm). The sequence is that of U2-plectoxin-Pt1a from Plectreurys tristis (Spider).